Here is a 177-residue protein sequence, read N- to C-terminus: Large ribosomal subunit protein uL6 (177 aa).

Belongs to the universal ribosomal protein uL6 family. As to quaternary structure, part of the 50S ribosomal subunit.

This protein binds to the 23S rRNA, and is important in its secondary structure. It is located near the subunit interface in the base of the L7/L12 stalk, and near the tRNA binding site of the peptidyltransferase center. This is Large ribosomal subunit protein uL6 from Rhodopseudomonas palustris (strain BisB5).